We begin with the raw amino-acid sequence, 289 residues long: MELIIISGRSGAGKSVALRALEDMGYYCVDNLPINLLPELADILSTSQQSAAVSLDIRNLPHSPETLDTLLQQLADAQHQVRIIFLEADRSTLIRRYSDSRRLHPLSMQDLSLEAAIEAEAGYLEPLLQNAELVINTSEISTHELAQRLREFLKGKPDKELKIVVESFGFKYGLPLDADYVFDVRFLPNPHWNPDLRPMTGLDQPVIDFLGKYSEVNNFIYSTRNYLETWLPMLEQNNRSYLTIAIGCTGGKHRSVYIAQQLGEYFQAKGKKVKIQHKSLEKHHKKNSA.

8–15 serves as a coordination point for ATP; the sequence is GRSGAGKS. Residue 56-59 coordinates GTP; that stretch reads DIRN.

Belongs to the RapZ-like family.

Displays ATPase and GTPase activities. This chain is Nucleotide-binding protein MS1718, found in Mannheimia succiniciproducens (strain KCTC 0769BP / MBEL55E).